Here is a 251-residue protein sequence, read N- to C-terminus: Cell division protein ZapD (251 aa).

The protein belongs to the ZapD family. As to quaternary structure, interacts with FtsZ.

It localises to the cytoplasm. In terms of biological role, cell division factor that enhances FtsZ-ring assembly. Directly interacts with FtsZ and promotes bundling of FtsZ protofilaments, with a reduction in FtsZ GTPase activity. The chain is Cell division protein ZapD from Nitrosomonas eutropha (strain DSM 101675 / C91 / Nm57).